A 131-amino-acid polypeptide reads, in one-letter code: MAQIPARGDCSRQLTRKQAGDAWEAAARLWLESKGLRFIAANVRERGGEIDLIMRDGKTTVFVEVRYRRSGLYGGAAASVTRSKQHKLLHTARLWLARQNGSFDTVDCRFDVLAFTGNEIEWFRDAFNDHS.

Belongs to the UPF0102 family.

This chain is UPF0102 protein YraN, found in Salmonella typhi.